A 239-amino-acid polypeptide reads, in one-letter code: Ribonuclease PH (239 aa).

Phosphate-binding positions include Arg-87 and 125–127 (GTR).

Belongs to the RNase PH family. In terms of assembly, homohexameric ring arranged as a trimer of dimers.

The catalysed reaction is tRNA(n+1) + phosphate = tRNA(n) + a ribonucleoside 5'-diphosphate. In terms of biological role, phosphorolytic 3'-5' exoribonuclease that plays an important role in tRNA 3'-end maturation. Removes nucleotide residues following the 3'-CCA terminus of tRNAs; can also add nucleotides to the ends of RNA molecules by using nucleoside diphosphates as substrates, but this may not be physiologically important. Probably plays a role in initiation of 16S rRNA degradation (leading to ribosome degradation) during starvation. In Pseudomonas paraeruginosa (strain DSM 24068 / PA7) (Pseudomonas aeruginosa (strain PA7)), this protein is Ribonuclease PH.